Here is a 106-residue protein sequence, read N- to C-terminus: Pyrimidine/purine nucleoside phosphorylase (106 aa).

This sequence belongs to the nucleoside phosphorylase PpnP family.

The catalysed reaction is a purine D-ribonucleoside + phosphate = a purine nucleobase + alpha-D-ribose 1-phosphate. It catalyses the reaction adenosine + phosphate = alpha-D-ribose 1-phosphate + adenine. The enzyme catalyses cytidine + phosphate = cytosine + alpha-D-ribose 1-phosphate. It carries out the reaction guanosine + phosphate = alpha-D-ribose 1-phosphate + guanine. The catalysed reaction is inosine + phosphate = alpha-D-ribose 1-phosphate + hypoxanthine. It catalyses the reaction thymidine + phosphate = 2-deoxy-alpha-D-ribose 1-phosphate + thymine. The enzyme catalyses uridine + phosphate = alpha-D-ribose 1-phosphate + uracil. It carries out the reaction xanthosine + phosphate = alpha-D-ribose 1-phosphate + xanthine. In terms of biological role, catalyzes the phosphorolysis of diverse nucleosides, yielding D-ribose 1-phosphate and the respective free bases. Can use uridine, adenosine, guanosine, cytidine, thymidine, inosine and xanthosine as substrates. Also catalyzes the reverse reactions. The protein is Pyrimidine/purine nucleoside phosphorylase of Burkholderia multivorans (strain ATCC 17616 / 249).